The primary structure comprises 272 residues: MEGGGGGGGGGGGGGGGGGGGGAPYATRTAEEVFRDLRGRRAGMIKALTTDVEKFYKLCDPEKENLCLYGYPNETWEVTLPAEEVPPEIPEPALGINFARDGMNEKDWLALVAVHSDSWLLSVAFYFGARFGFDREARRRLFNMINNLPTIFEVVTGAAKKQAKEKTPNSSSKSNKPSSKVQSKAESRSKSKLSAPKDEEGSGDDEGEEEEDDHDNTLCGTCGTNDGKDEFWICCDNCEKWYHGKCVKITPARAEHIKQYKCPDCTNKRTRA.

Residues M1–A23 show a composition bias toward gly residues. Disordered regions lie at residues M1 to P24 and Q162 to L218. Residues P168–Q182 show a composition bias toward low complexity. Over residues S183 to E200 the composition is skewed to basic and acidic residues. Residues G201–H214 show a composition bias toward acidic residues. A PHD-type zinc finger spans residues N216 to K268.

Belongs to the Alfin family.

Its subcellular location is the nucleus. In terms of biological role, histone-binding component that specifically recognizes H3 tails trimethylated on 'Lys-4' (H3K4me3), which mark transcription start sites of virtually all active genes. The protein is PHD finger protein ALFIN-LIKE 6 of Oryza sativa subsp. indica (Rice).